The primary structure comprises 602 residues: Elongation factor 4 (602 aa).

A tr-type G domain is found at 7–189; sequence KHIRNFSIVA…AIVDKIPSPQ (183 aa). GTP-binding positions include 19–24 and 136–139; these read DHGKST and NKID.

The protein belongs to the TRAFAC class translation factor GTPase superfamily. Classic translation factor GTPase family. LepA subfamily.

Its subcellular location is the cell membrane. The catalysed reaction is GTP + H2O = GDP + phosphate + H(+). In terms of biological role, required for accurate and efficient protein synthesis under certain stress conditions. May act as a fidelity factor of the translation reaction, by catalyzing a one-codon backward translocation of tRNAs on improperly translocated ribosomes. Back-translocation proceeds from a post-translocation (POST) complex to a pre-translocation (PRE) complex, thus giving elongation factor G a second chance to translocate the tRNAs correctly. Binds to ribosomes in a GTP-dependent manner. The sequence is that of Elongation factor 4 from Clostridium kluyveri (strain ATCC 8527 / DSM 555 / NBRC 12016 / NCIMB 10680 / K1).